Reading from the N-terminus, the 235-residue chain is Small ribosomal subunit protein uS3 (235 aa).

The KH type-2 domain maps to 39–107 (IRDFIKKECH…ELHLNIVEVR (69 aa)). A disordered region spans residues 213–235 (AARDRKAQELQDGPAPRGAGGRR).

The protein belongs to the universal ribosomal protein uS3 family. Part of the 30S ribosomal subunit. Forms a tight complex with proteins S10 and S14.

Functionally, binds the lower part of the 30S subunit head. Binds mRNA in the 70S ribosome, positioning it for translation. The protein is Small ribosomal subunit protein uS3 of Roseobacter denitrificans (strain ATCC 33942 / OCh 114) (Erythrobacter sp. (strain OCh 114)).